A 530-amino-acid polypeptide reads, in one-letter code: Ubiquitin carboxyl-terminal hydrolase 17-like protein 12 (530 aa).

The USP domain maps to 80 to 375 (AGLQNMGNTC…QAYVLFYIQK (296 aa)). Cys-89 functions as the Nucleophile in the catalytic mechanism. The Proton acceptor role is filled by His-334. Composition is skewed to basic and acidic residues over residues 382-392 (SESVSRGREPR) and 398-412 (DTDR…KRDH). Disordered regions lie at residues 382–412 (SESV…KRDH) and 477–530 (NHHP…LVCQ). Residues 484-495 (SSLLKLSSTTPT) show a composition bias toward low complexity. A compositionally biased stretch (polar residues) spans 496–505 (HQESMNTGTL). The segment covering 510-524 (GRARRSKGKNKHSKR) has biased composition (basic residues).

This sequence belongs to the peptidase C19 family. USP17 subfamily.

The protein localises to the nucleus. Its subcellular location is the endoplasmic reticulum. It carries out the reaction Thiol-dependent hydrolysis of ester, thioester, amide, peptide and isopeptide bonds formed by the C-terminal Gly of ubiquitin (a 76-residue protein attached to proteins as an intracellular targeting signal).. In terms of biological role, deubiquitinating enzyme that removes conjugated ubiquitin from specific proteins to regulate different cellular processes that may include cell proliferation, progression through the cell cycle, apoptosis, cell migration, and the cellular response to viral infection. The polypeptide is Ubiquitin carboxyl-terminal hydrolase 17-like protein 12 (USP17L12) (Homo sapiens (Human)).